We begin with the raw amino-acid sequence, 506 residues long: tRNA-2-methylthio-N(6)-dimethylallyladenosine synthase (506 aa).

Residues 14-132 (KSYEVRTYGC…LPVLLERARV (119 aa)) form the MTTase N-terminal domain. Cys23, Cys61, Cys95, Cys169, Cys173, and Cys176 together coordinate [4Fe-4S] cluster. The Radical SAM core domain maps to 155 to 386 (RESAYAAWVS…ALQEQISWDE (232 aa)). Positions 388–456 (KKQVGRTLDV…PHHLLAEGTP (69 aa)) constitute a TRAM domain.

The protein belongs to the methylthiotransferase family. MiaB subfamily. Monomer. Requires [4Fe-4S] cluster as cofactor.

Its subcellular location is the cytoplasm. The catalysed reaction is N(6)-dimethylallyladenosine(37) in tRNA + (sulfur carrier)-SH + AH2 + 2 S-adenosyl-L-methionine = 2-methylsulfanyl-N(6)-dimethylallyladenosine(37) in tRNA + (sulfur carrier)-H + 5'-deoxyadenosine + L-methionine + A + S-adenosyl-L-homocysteine + 2 H(+). Catalyzes the methylthiolation of N6-(dimethylallyl)adenosine (i(6)A), leading to the formation of 2-methylthio-N6-(dimethylallyl)adenosine (ms(2)i(6)A) at position 37 in tRNAs that read codons beginning with uridine. This is tRNA-2-methylthio-N(6)-dimethylallyladenosine synthase from Streptomyces griseus subsp. griseus (strain JCM 4626 / CBS 651.72 / NBRC 13350 / KCC S-0626 / ISP 5235).